Consider the following 71-residue polypeptide: Beta-defensin 124 (71 aa).

The first 22 residues, Met-1–Ser-22, serve as a signal peptide directing secretion. Disulfide bonds link Cys-27–Cys-54, Cys-34–Cys-48, and Cys-38–Cys-55.

The protein belongs to the beta-defensin family.

It localises to the secreted. Has antibacterial activity. This is Beta-defensin 124 (DEFB124) from Pan troglodytes (Chimpanzee).